We begin with the raw amino-acid sequence, 287 residues long: Intermediate filament family orphan 2 (287 aa).

The IF rod domain occupies 1–254; the sequence is MNLQTMVDTL…RLIKGSADRN (254 aa). Residues 248–287 are disordered; the sequence is KGSADRNSPSPSSVASSDSGSTDEIQDDLEREADVEPMVS. The segment covering 255–267 has biased composition (low complexity); it reads SPSPSSVASSDSG. Residues 271–287 are compositionally biased toward acidic residues; sequence EIQDDLEREADVEPMVS.

Belongs to the intermediate filament family.

The protein is Intermediate filament family orphan 2 (Iffo2) of Rattus norvegicus (Rat).